The primary structure comprises 230 residues: Large ribosomal subunit protein uL1 (230 aa).

Belongs to the universal ribosomal protein uL1 family. As to quaternary structure, part of the 50S ribosomal subunit.

Binds directly to 23S rRNA. The L1 stalk is quite mobile in the ribosome, and is involved in E site tRNA release. Functionally, protein L1 is also a translational repressor protein, it controls the translation of the L11 operon by binding to its mRNA. The polypeptide is Large ribosomal subunit protein uL1 (Afipia carboxidovorans (strain ATCC 49405 / DSM 1227 / KCTC 32145 / OM5) (Oligotropha carboxidovorans)).